We begin with the raw amino-acid sequence, 145 residues long: Large ribosomal subunit protein bL19 (145 aa).

Belongs to the bacterial ribosomal protein bL19 family.

Functionally, this protein is located at the 30S-50S ribosomal subunit interface and may play a role in the structure and function of the aminoacyl-tRNA binding site. This chain is Large ribosomal subunit protein bL19, found in Brachyspira hyodysenteriae (strain ATCC 49526 / WA1).